Reading from the N-terminus, the 110-residue chain is UPF0122 protein spr1167 (110 aa).

The protein belongs to the UPF0122 family.

Its function is as follows. Might take part in the signal recognition particle (SRP) pathway. This is inferred from the conservation of its genetic proximity to ftsY/ffh. May be a regulatory protein. This chain is UPF0122 protein spr1167, found in Streptococcus pneumoniae (strain ATCC BAA-255 / R6).